Reading from the N-terminus, the 69-residue chain is Dodecin (69 aa).

3-5 (KVY) is a binding site for FMN. CoA is bound by residues K6, R28, and 32–34 (TLR). 5 residues coordinate FMN: D37, W38, R45, Q57, and R65. 65 to 67 (RLE) lines the CoA pocket.

Belongs to the dodecin family. Homododecamer; four homotrimers assemble to form a dodecameric hollow sphere with an outer diameter of about 60 Angstroms. Flavin dimers are bound between subunits with a stoichiometry of 6 flavin dimers per dodecamer. Besides, trimeric coenzyme A molecules can be bound between subunits. A dodecamer can bind simultaneously 12 flavin and 12 coenzyme A molecules.

In terms of biological role, may function as storage protein that sequesters various flavins and other cofactors, thereby protecting the cell against undesirable reactions mediated by the free cofactors. Binds and sequesters FMN, FAD, lumiflavin and lumichrome, and can also bind coenzyme A. This chain is Dodecin, found in Thermus thermophilus (strain ATCC 27634 / DSM 579 / HB8).